Reading from the N-terminus, the 81-residue chain is Saposin-C (81 aa).

The region spanning 1 to 81 (ESVTCKACEY…CSELGLCMSG (81 aa)) is the Saposin B-type domain. 3 disulfides stabilise this stretch: Cys-5–Cys-78, Cys-8–Cys-72, and Cys-36–Cys-47. An N-linked (GlcNAc...) asparagine glycan is attached at Asn-22.

Its function is as follows. Saposin-A and saposin-C stimulate the hydrolysis of glucosylceramide by beta-glucosylceramidase (EC 3.2.1.45) and galactosylceramide by beta-galactosylceramidase (EC 3.2.1.46). Saposin-C apparently acts by combining with the enzyme and acidic lipid to form an activated complex, rather than by solubilizing the substrate. This chain is Saposin-C (PSAP), found in Cavia porcellus (Guinea pig).